The chain runs to 130 residues: Small ribosomal subunit protein uS9 (130 aa).

The protein belongs to the universal ribosomal protein uS9 family.

In Burkholderia pseudomallei (strain K96243), this protein is Small ribosomal subunit protein uS9.